Here is a 277-residue protein sequence, read N- to C-terminus: NLP effector protein Pc109095 (277 aa).

Residues methionine 1–glycine 19 form the signal peptide. The short motif at arginine 119–alanine 125 is the Hepta-peptide GHRHDWE motif element. The N-linked (GlcNAc...) asparagine glycan is linked to asparagine 199.

The protein belongs to the Necrosis inducing protein (NPP1) family.

It localises to the secreted. In terms of biological role, secreted effector that contributes strongly to virulence during infection by P.capsici. This chain is NLP effector protein Pc109095, found in Phytophthora capsici.